The primary structure comprises 644 residues: uncharacterized protein (644 aa).

254-261 is a binding site for ATP; the sequence is GKMGAGKS.

This is an uncharacterized protein from Bacillus anthracis.